A 714-amino-acid chain; its full sequence is Glycine--tRNA ligase beta subunit (714 aa).

Belongs to the class-II aminoacyl-tRNA synthetase family. As to quaternary structure, tetramer of two alpha and two beta subunits.

Its subcellular location is the cytoplasm. The catalysed reaction is tRNA(Gly) + glycine + ATP = glycyl-tRNA(Gly) + AMP + diphosphate. The polypeptide is Glycine--tRNA ligase beta subunit (Rhodospirillum centenum (strain ATCC 51521 / SW)).